The primary structure comprises 271 residues: uncharacterized protein (271 aa).

This sequence belongs to the HAD-like hydrolase superfamily.

This is an uncharacterized protein from Staphylococcus aureus.